Consider the following 29-residue polypeptide: Cyclotide mela-7 (29 aa).

Residues 1 to 29 (GLPTCGETCFKGKCYTPGCSCSYPICKKN) constitute a cross-link (cyclopeptide (Gly-Asn)). 3 disulfide bridges follow: Cys5–Cys19, Cys9–Cys21, and Cys14–Cys26.

This is a cyclic peptide. Post-translationally, contains 3 disulfide bonds.

Its function is as follows. Probably participates in a plant defense mechanism (Potential). Binds to and induces leakage in phospholipd membranes, particularly ones containing 1-palmitoyl-2-oleophosphatidylethanolamine (POPE). In vitro, displays cytotoxicity against cultured cells but no hemolytic activity towards fresh erythrocytes. Not active against Gram-negative bacterium E.coli ATCC 25922 or Gram-positive bacterium S.aureus ATCC 25923 up to a concentration of 64 uM. This chain is Cyclotide mela-7, found in Melicytus latifolius (Norfolk Island mahoe).